Reading from the N-terminus, the 127-residue chain is uncharacterized protein (127 aa).

Residues 85-107 traverse the membrane as a helical segment; it reads VYLGKIGFVLLHVFYLSCIAYYD.

The protein resides in the mitochondrion membrane. This is an uncharacterized protein from Dictyostelium discoideum (Social amoeba).